An 88-amino-acid chain; its full sequence is Large ribosomal subunit protein bL31B (88 aa).

It belongs to the bacterial ribosomal protein bL31 family. Type B subfamily. Part of the 50S ribosomal subunit.

The chain is Large ribosomal subunit protein bL31B from Corynebacterium glutamicum (strain R).